Reading from the N-terminus, the 257-residue chain is UPF0246 protein YaaA (257 aa).

Belongs to the UPF0246 family.

The sequence is that of UPF0246 protein YaaA from Salmonella agona (strain SL483).